The following is a 419-amino-acid chain: L-rhamnose isomerase (419 aa).

Mn(2+) is bound by residues His262, Asp294, and Asp296.

It belongs to the rhamnose isomerase family. As to quaternary structure, homotetramer. Mn(2+) is required as a cofactor.

Its subcellular location is the cytoplasm. It carries out the reaction L-rhamnopyranose = L-rhamnulose. It participates in carbohydrate degradation; L-rhamnose degradation; glycerone phosphate from L-rhamnose: step 1/3. In terms of biological role, catalyzes the interconversion of L-rhamnose and L-rhamnulose. This Salmonella typhimurium (strain LT2 / SGSC1412 / ATCC 700720) protein is L-rhamnose isomerase.